The sequence spans 318 residues: Peptidyl-prolyl cis-trans isomerase CPR4 (318 aa).

An N-terminal signal peptide occupies residues Met1 to Ala20. Residues Tyr55 to Leu225 enclose the PPIase cyclophilin-type domain. N-linked (GlcNAc...) asparagine glycosylation is present at Asn166. The chain crosses the membrane as a helical span at residues Ile286 to Tyr303.

It localises to the membrane. The catalysed reaction is [protein]-peptidylproline (omega=180) = [protein]-peptidylproline (omega=0). Functionally, PPIases accelerate the folding of proteins. It catalyzes the cis-trans isomerization of proline imidic peptide bonds in oligopeptides. This is Peptidyl-prolyl cis-trans isomerase CPR4 (CPR4) from Saccharomyces cerevisiae (strain ATCC 204508 / S288c) (Baker's yeast).